Consider the following 238-residue polypeptide: Ribonuclease PH (238 aa).

Phosphate contacts are provided by residues R86 and 124–126 (GTR).

This sequence belongs to the RNase PH family. In terms of assembly, homohexameric ring arranged as a trimer of dimers.

The enzyme catalyses tRNA(n+1) + phosphate = tRNA(n) + a ribonucleoside 5'-diphosphate. Its function is as follows. Phosphorolytic 3'-5' exoribonuclease that plays an important role in tRNA 3'-end maturation. Removes nucleotide residues following the 3'-CCA terminus of tRNAs; can also add nucleotides to the ends of RNA molecules by using nucleoside diphosphates as substrates, but this may not be physiologically important. Probably plays a role in initiation of 16S rRNA degradation (leading to ribosome degradation) during starvation. The protein is Ribonuclease PH of Serratia proteamaculans (strain 568).